The following is a 309-amino-acid chain: MLRVVVLGAGAGGGVPQWNCGCEGCRTARAIGDELLRTQASVAFSGDGEHWFLINASPDLRQQLNATPQLHPKPGALRHTPVAGVILTNGEVDAVAGLLSMREGSPFTVYAHEKVLAILSANSIFNVLNEKNVRRQPIAISEPFEPRLVDGARSGIEVLPFAVPGKSAWYLEGKAHPGGETGDGDTLGLKITDKTTGKCFYFIAACAEVTDALKAEIDGAALVFFDGTVWQDDEMIKAGLGHKTGKSMGHVAMSGEDGAIARLADLDIDRKLFLHINNSNPALLPASPERKAAEQAGWQIPADGTEIVL.

Belongs to the PqqB family.

The protein operates within cofactor biosynthesis; pyrroloquinoline quinone biosynthesis. In terms of biological role, may be involved in the transport of PQQ or its precursor to the periplasm. This chain is Coenzyme PQQ synthesis protein B, found in Bradyrhizobium diazoefficiens (strain JCM 10833 / BCRC 13528 / IAM 13628 / NBRC 14792 / USDA 110).